The primary structure comprises 490 residues: Hippocampus abundant transcript 1 protein (490 aa).

Met-1 carries the N-acetylmethionine modification. The Extracellular portion of the chain corresponds to 1-40; the sequence is MTQGKKKKRAANRSIMLAKKIIIKDGGTPQGIGSPSVYHA. An N-linked (GlcNAc...) asparagine glycan is attached at Asn-12. The helical transmembrane segment at 41–61 threads the bilayer; that stretch reads VIVIFLEFFAWGLLTAPTLVV. Residues 62–74 are Cytoplasmic-facing; sequence LHETFPKHTFLMN. A helical transmembrane segment spans residues 75 to 95; sequence GLIQGVKGLLSFLSAPLIGAL. Over 96-103 the chain is Extracellular; the sequence is SDVWGRKS. Residues 104–124 traverse the membrane as a helical segment; it reads FLLLTVFFTCAPIPLMKISPW. The Cytoplasmic segment spans residues 125 to 126; it reads WY. A helical transmembrane segment spans residues 127–147; that stretch reads FAVISVSGVFAVTFSVVFAYV. Residues 148–160 are Extracellular-facing; it reads ADITQEHERSMAY. Residues 161 to 181 traverse the membrane as a helical segment; it reads GLVSATFAASLVTSPAIGAYL. At 182–188 the chain is on the cytoplasmic side; that stretch reads GRVYGDS. A helical membrane pass occupies residues 189–209; it reads LVVVLATAIALLDICFILVAV. Residues 210 to 243 lie on the Extracellular side of the membrane; sequence PESLPEKMRPASWGAPISWEQADPFASLKKVGQD. Residues 244–264 traverse the membrane as a helical segment; it reads SIVLLICITVFLSYLPEAGQY. The Cytoplasmic portion of the chain corresponds to 265–284; that stretch reads SSFFLYLRQIMKFSPESVAA. Residues 285 to 305 traverse the membrane as a helical segment; sequence FIAVLGILSIIAQTIVLSLLM. The Extracellular segment spans residues 306-313; the sequence is RSIGNKNT. The helical transmembrane segment at 314 to 334 threads the bilayer; the sequence is ILLGLGFQILQLAWYGFGSEP. The Cytoplasmic segment spans residues 335-337; sequence WMM. The helical transmembrane segment at 338–358 threads the bilayer; the sequence is WAAGAVAAMSSITFPAVSALV. Topologically, residues 359–379 are extracellular; it reads SRTADADQQGVVQGMITGIRG. The chain crosses the membrane as a helical span at residues 380-400; the sequence is LCNGLGPALYGFIFYIFHVEL. Over 401 to 427 the chain is Cytoplasmic; that stretch reads KELPITGTDLGTNTSPQHHFEQNSIIP. Residues 428 to 448 form a helical membrane-spanning segment; it reads GPPFLFGACSVLLALLVALFI. Topologically, residues 449 to 490 are extracellular; it reads PEHTNLSLRSSSWRKHCGSHSHPHSTQAPGEAKEPLLQDTNV. N-linked (GlcNAc...) asparagine glycosylation is present at Asn-453. The interval 466-490 is disordered; the sequence is GSHSHPHSTQAPGEAKEPLLQDTNV.

This sequence belongs to the major facilitator superfamily. Expressed in various tissues.

Its subcellular location is the membrane. This Mus musculus (Mouse) protein is Hippocampus abundant transcript 1 protein.